Reading from the N-terminus, the 204-residue chain is Casparian strip membrane protein 2 (204 aa).

The Cytoplasmic segment spans residues 1–42; it reads MKNESTFIDVPAESSSAMKGKAPLIGVARDHTTSGSGGYNRG. A helical transmembrane segment spans residues 43–63; sequence LAIFDFLLRLAAIVAALAAAA. Topologically, residues 64-92 are extracellular; that stretch reads TMGTSDETLPFFTQFLQFEASYDDLPTFQ. Residues 93-113 form a helical membrane-spanning segment; sequence FFVIAMALVGGYLVLSLPISV. Residues 114 to 125 lie on the Cytoplasmic side of the membrane; sequence VTILRPLATAPR. The chain crosses the membrane as a helical span at residues 126 to 146; the sequence is LLLLVLDTGVLALNTAAASSA. Residues 147–178 lie on the Extracellular side of the membrane; it reads AAISYLAHSGNQNTNWLPICQQFGDFCQKSSG. The helical transmembrane segment at 179-199 threads the bilayer; that stretch reads AVVSAFVSVVFFTILVVISGV. Residues 200-204 are Cytoplasmic-facing; that stretch reads ALKRH.

Belongs to the Casparian strip membrane proteins (CASP) family. As to quaternary structure, homodimer and heterodimers with other CASP proteins. Interacts with CASP1, CASP3 and CASP4.

It is found in the cell membrane. Regulates membrane-cell wall junctions and localized cell wall deposition. Required for establishment of the Casparian strip membrane domain (CSD) and the subsequent formation of Casparian strips, a cell wall modification of the root endodermis that determines an apoplastic barrier between the intraorganismal apoplasm and the extraorganismal apoplasm and prevents lateral diffusion. The polypeptide is Casparian strip membrane protein 2 (CASP2) (Arabidopsis thaliana (Mouse-ear cress)).